A 714-amino-acid polypeptide reads, in one-letter code: Polynucleotide 5'-hydroxyl-kinase NOL9 (714 aa).

Ala2 bears the N-acetylalanine mark. A Nucleolar localization signal motif is present at residues Arg31–Arg47. The tract at residues Ala80–Gln133 is disordered. Over residues Pro86–Pro98 the composition is skewed to pro residues. A compositionally biased stretch (polar residues) spans Leu107–Ser118. The residue at position 128 (Ser128) is a Phosphoserine. Gly322–Ser329 provides a ligand contact to ATP. Positions Phe495 to Lys714 are interaction with LAS1L. Residue Lys500 forms a Glycyl lysine isopeptide (Lys-Gly) (interchain with G-Cter in SUMO2) linkage. A Phosphoserine modification is found at Ser502.

Belongs to the Clp1 family. NOL9/GRC3 subfamily. As to quaternary structure, interacts with PELP1, WDR18 and SENP3. Interacts with LAS1L to form an ITS2 pre-rRNA endonuclease-kinase complex.

The protein localises to the nucleus. It is found in the nucleolus. The catalysed reaction is a 5'-end dephospho-2'-deoxyribonucleoside-DNA + ATP = a 5'-end 5'-phospho-2'-deoxyribonucleoside-DNA + ADP + H(+). It catalyses the reaction a 5'-end dephospho-ribonucleoside-RNA + ATP = a 5'-end 5'-phospho-ribonucleoside-RNA + ADP + H(+). Its function is as follows. Polynucleotide kinase that can phosphorylate the 5'-hydroxyl groups of single-stranded and double-stranded RNA and DNA substrates. Involved in rRNA processing and its kinase activity is required for the processing of the 32S precursor into 5.8S and 28S rRNAs, more specifically for the generation of the major 5.8S(S) form. Required for the efficient pre-rRNA processing of internal transcribed spacer 2 (ITS2). Associates with LAS1L to form an ITS2 pre-rRNA endonuclease-kinase complex and is responsible for the transport of this complex into the nucleolus. This Mus musculus (Mouse) protein is Polynucleotide 5'-hydroxyl-kinase NOL9.